Here is a 165-residue protein sequence, read N- to C-terminus: 3-isopropylmalate dehydratase small subunit 2 (165 aa).

It belongs to the LeuD family. LeuD type 2 subfamily. As to quaternary structure, heterodimer of LeuC and LeuD.

It catalyses the reaction (2R,3S)-3-isopropylmalate = (2S)-2-isopropylmalate. It participates in amino-acid biosynthesis; L-leucine biosynthesis; L-leucine from 3-methyl-2-oxobutanoate: step 2/4. Functionally, catalyzes the isomerization between 2-isopropylmalate and 3-isopropylmalate, via the formation of 2-isopropylmaleate. The polypeptide is 3-isopropylmalate dehydratase small subunit 2 (leuD2) (Archaeoglobus fulgidus (strain ATCC 49558 / DSM 4304 / JCM 9628 / NBRC 100126 / VC-16)).